The primary structure comprises 286 residues: Glycine--tRNA ligase alpha subunit (286 aa).

Belongs to the class-II aminoacyl-tRNA synthetase family. In terms of assembly, tetramer of two alpha and two beta subunits.

The protein resides in the cytoplasm. It catalyses the reaction tRNA(Gly) + glycine + ATP = glycyl-tRNA(Gly) + AMP + diphosphate. This is Glycine--tRNA ligase alpha subunit from Thermotoga petrophila (strain ATCC BAA-488 / DSM 13995 / JCM 10881 / RKU-1).